A 437-amino-acid polypeptide reads, in one-letter code: MTQFLPPNLLALFAPRDPIPYLPPLEKLPHEKHHNQPYCGIAPYIREFEDPRDAPPPTRAETREERMERKRREKIERRQQEVETELKMWDPHNDPNAQGDAFKTLFVARVNYDTTESKLRREFEVYGPIKRIHMVYSKRSGKPRGYAFIEYEHERDMHSAYKHADGKKIDGRRVLVDVERGRTVKGWRPRRLGGGLGGTRRGGADVNIRHSGRDDTSRYDERPGPSPLPHRDRDRDRERERRERSRERDKERERRRSRSRDRRRRSRSRDKEERRRSRERSKDKDRDRKRRSSRSRERARRERERKEELRGGGGDMAEPSEAGDAPPDDGPPGELGPDGPDGPEEKGRDRDRERRRSHRSERERRRDRDRDRDRDREHKRGERGSERGRDEARGGGGGQDNGLEGLGNDSRDMYMESEGGDGYLAPENGYLMEAAPE.

Thr-2 carries the post-translational modification N-acetylthreonine. The segment at 48–79 (FEDPRDAPPPTRAETREERMERKRREKIERRQ) is disordered. Basic and acidic residues predominate over residues 60-79 (AETREERMERKRREKIERRQ). Residues 92-202 (HNDPNAQGDA…GGGLGGTRRG (111 aa)) form a required for interaction with U1 RNA region. Positions 103–181 (KTLFVARVNY…RRVLVDVERG (79 aa)) constitute an RRM domain. Lys-118 is modified (N6-acetyllysine). At Tyr-126 the chain carries Phosphotyrosine. The tract at residues 187-437 (WRPRRLGGGL…NGYLMEAAPE (251 aa)) is disordered. The segment covering 192–201 (LGGGLGGTRR) has biased composition (gly residues). Residues 207 to 254 (NIRHSGRDDTSRYDERPGPSPLPHRDRDRDRERERRERSRERDKERER) are compositionally biased toward basic and acidic residues. Phosphoserine is present on residues Ser-226 and Ser-268. Over residues 255–268 (RRSRSRDRRRRSRS) the composition is skewed to basic residues. Composition is skewed to basic and acidic residues over residues 269–286 (RDKE…DKDR) and 294–310 (RSRE…EELR). Ser-320 is subject to Phosphoserine. Basic and acidic residues predominate over residues 343-393 (PEEKGRDRDRERRRSHRSERERRRDRDRDRDRDREHKRGERGSERGRDEAR). Lys-346 participates in a covalent cross-link: Glycyl lysine isopeptide (Lys-Gly) (interchain with G-Cter in SUMO2). The residue at position 410 (Ser-410) is a Phosphoserine.

As to quaternary structure, component of the U1 snRNP. The U1 snRNP is composed of the U1 snRNA and the 7 core Sm proteins SNRPB, SNRPD1, SNRPD2, SNRPD3, SNRPE, SNRPF and SNRPG that assemble in a heptameric protein ring on the Sm site of the small nuclear RNA to form the core snRNP, and at least three U1 snRNP-specific proteins SNRNP70/U1-70K, SNRPA/U1-A and SNRPC/U1-C. Interacts with SCNM1. Found in a pre-mRNA splicing complex with SFRS4, SFRS5, SNRNP70, SNRPA1, SRRM1 and SRRM2. Found in a pre-mRNA exonic splicing enhancer (ESE) complex with SNRNP70, SNRPA1, SRRM1 and TRA2B/SFRS10. Interacts with dephosphorylated SFRS13A and SFPQ. Interacts with NUDT21/CPSF5, CPSF6, SCAF11, and ZRANB2. Interacts with GEMIN5. Interacts with FUS. The N-terminus is blocked. In terms of processing, extensively phosphorylated on serine residues in the C-terminal region.

It localises to the nucleus speckle. The protein resides in the nucleus. It is found in the nucleoplasm. Its function is as follows. Component of the spliceosomal U1 snRNP, which is essential for recognition of the pre-mRNA 5' splice-site and the subsequent assembly of the spliceosome. SNRNP70 binds to the loop I region of U1-snRNA. In terms of biological role, truncated isoforms that lack the RRM domain cannot bind U1-snRNA. This is U1 small nuclear ribonucleoprotein 70 kDa (SNRNP70) from Homo sapiens (Human).